The primary structure comprises 476 residues: Lactate utilization protein B (476 aa).

4Fe-4S ferredoxin-type domains lie at 304-334 (GTEF…GHSY) and 353-382 (YDDY…LHEL). Residues cysteine 313, cysteine 316, cysteine 319, cysteine 323, cysteine 366, cysteine 369, and cysteine 373 each contribute to the [4Fe-4S] cluster site.

Belongs to the LutB/YkgF family.

Functionally, is involved in L-lactate degradation and allows cells to grow with lactate as the sole carbon source. Has probably a role as an electron transporter during oxidation of L-lactate. This Geobacillus thermodenitrificans (strain NG80-2) protein is Lactate utilization protein B.